The primary structure comprises 104 residues: Translation initiation factor 1A (104 aa).

Positions 1–14 (MRGQQTPPQQPTRV) are enriched in low complexity. Positions 1–20 (MRGQQTPPQQPTRVRTPREN) are disordered. The S1-like domain occupies 12–87 (TRVRTPRENE…EKCDVIWRYT (76 aa)).

The protein belongs to the eIF-1A family.

In terms of biological role, seems to be required for maximal rate of protein biosynthesis. Enhances ribosome dissociation into subunits and stabilizes the binding of the initiator Met-tRNA(I) to 40 S ribosomal subunits. In Methanococcus maripaludis (strain DSM 14266 / JCM 13030 / NBRC 101832 / S2 / LL), this protein is Translation initiation factor 1A.